The following is a 593-amino-acid chain: MQPQPHISPNTATAAISAALESQRSRKNRGSYNCGRCGQPKKGHVCLLTAPPDIPTTPIASEPVSCISAAASSSRSTVLSLTAAPSSRQTFTHLRRALSFDDVDARNSLDESDLDAASMDLDLQLDTDIVQPGRFHAVGLWEVLKRLPPSSLLMAARVCKGWRETSRKMWKAAEELRIRVPERAQIGYIGSLLQKCPRLIRLSLKIESDFDATTLACIAFSCPNLEVLEITTSGAAVNRISGDELSRFVANKRGLTSLKMEGCSNLGGFSLSSSSLSTLWLSDLHSLSKMIFNCPNLTEISLEFSRQEDDSTDLVTMVDGLGRTCTRLQNIHIASLKLSHTVVLSLTAVNFRYLRMLSLVLGINITDASVAAISSGYKNLELLDLSGSSITDTGLGMICDVLPDTLSKLLVALCPNITSSGIQFATAQLPLLELMDCGMTVSDPNSDNPTFVENPSPHKTPGYNQKMFIKHKRLKKLSLWGCSSLDALFLNCPELMDLNLNLCSNLHPESLVLQCPKLQLVYASGCQGLLTGAIRKQVSENFSAGENHMPRKRLADASKRIQALPSLYQETREDGIYAGKRRKLEKEMCTIIH.

The 58-residue stretch at 120-177 (DLDLQLDTDIVQPGRFHAVGLWEVLKRLPPSSLLMAARVCKGWRETSRKMWKAAEELR) folds into the F-box domain. LRR repeat units lie at residues 178-206 (IRVP…SLKI), 207-232 (ESDF…EITT), 237-262 (VNRI…KMEG), 276-304 (LSTL…SLEF), 335-361 (SLKL…SLVL), 362-387 (GINI…DLSG), 414-439 (CPNI…DCGM), 477-502 (LSLW…NLNL), and 503-525 (CSNL…YASG).

Part of a SCF (ASK-cullin-F-box) protein ligase complex. Interacts with SKP1A/ASK1, KRP4, KRP6 and KRP7. In terms of tissue distribution, expressed in developing pollen.

It localises to the nucleus. It participates in protein modification; protein ubiquitination. Essential protein for male fertility. Component of the SCF(ASK-cullin-F-box) E3 ubiquitin ligase complex SCF(FBL17), which mediates the ubiquitination and subsequent proteasomal degradation of target proteins. Enables the switch in cell cycle control leading to male germ cell lineage formation from microspores after meiosis. Targets CDKA-1 inhibitors the degradation specifically in male germ cells (e.g. KRP6 and KRP7) and thus enables CDKA-1 activation and germ cell S-phase progression. Promotes twin sperm cell production and double fertilization. In Arabidopsis thaliana (Mouse-ear cress), this protein is F-box/LRR-repeat protein 17 (FBL17).